We begin with the raw amino-acid sequence, 3014 residues long: Cadherin EGF LAG seven-pass G-type receptor 1 (3014 aa).

The first 20 residues, 1–20, serve as a signal peptide directing secretion; it reads MAPPPPPVLPVLLLLAAAAA. Residues 22 to 2469 lie on the Extracellular side of the membrane; sequence PAMGLRAAAW…RENGEVLPLK (2448 aa). The tract at residues 205–242 is disordered; that stretch reads AGTPSASPSPSPPLPPNLPEARAGPARRARRGTSGRGS. The segment covering 211 to 222 has biased composition (pro residues); that stretch reads SPSPSPPLPPNL. 9 Cadherin domains span residues 246–353, 354–459, 460–565, 566–687, 688–789, 790–892, 893–999, 1000–1101, and 1106–1224; these read PMPN…SPVF, EQSE…YPQF, SEQN…EPIF, VSSP…DPVF, TQPT…RPVF, QSSH…APQF, LWDF…APMF, EKDE…PPVL, and ILFN…SPLL. 4 N-linked (GlcNAc...) asparagine glycosylation sites follow: Asn403, Asn546, Asn634, and Asn778. N-linked (GlcNAc...) asparagine glycosylation is found at Asn1114, Asn1139, Asn1213, Asn1249, Asn1259, and Asn1287. An EGF-like 1; calcium-binding domain is found at 1303–1361; the sequence is DDNICLREPCENYMKCVSVLRFDSSAPFLSSTTVLFRPIHPINGLRCRCPPGFTGDYCE. Intrachain disulfides connect Cys1307/Cys1318, Cys1312/Cys1349, Cys1351/Cys1360, Cys1367/Cys1378, Cys1372/Cys1387, Cys1389/Cys1398, Cys1407/Cys1418, Cys1412/Cys1428, and Cys1430/Cys1440. The 37-residue stretch at 1363-1399 folds into the EGF-like 2; calcium-binding domain; the sequence is EIDLCYSDPCGANGRCRSREGGYTCECFEDFTGEHCE. In terms of domain architecture, EGF-like 3; calcium-binding spans 1403 to 1441; it reads RSGRCANGVCKNGGTCVNLLIGGFHCVCPPGEYERPYCE. In terms of domain architecture, Laminin G-like 1 spans 1442-1646; sequence VTTRSFPPQS…IANNGTREGC (205 aa). Asn1576, Asn1623, and Asn1640 each carry an N-linked (GlcNAc...) asparagine glycan. 13 cysteine pairs are disulfide-bonded: Cys1620–Cys1646, Cys1653–Cys1664, Cys1658–Cys1673, Cys1675–Cys1684, Cys1840–Cys1870, Cys1876–Cys1887, Cys1881–Cys1896, Cys1898–Cys1907, Cys1911–Cys1922, Cys1916–Cys1934, Cys1936–Cys1945, Cys1953–Cys1966, and Cys1968–Cys1978. The EGF-like 4; calcium-binding domain occupies 1649 to 1685; that stretch reads RRNFCDGRRCQNGGTCVNRWNMYLCECPLRFGGKNCE. The residue at position 1666 (Asn1666) is a (3R)-3-hydroxyasparagine. A Laminin G-like 2 domain is found at 1689–1870; sequence PHPQLFSGES…ALKVRVKDGC (182 aa). One can recognise an EGF-like 5; calcium-binding domain in the interval 1872–1907; that stretch reads VDDPCTSSPCPPNSRCHDAWEDYSCVCDKGYLGINC. A (3R)-3-hydroxyaspartate modification is found at Asp1889. Residues 1908-1946 enclose the EGF-like 6; calcium-binding domain; sequence VDACHLNPCENMGACVRSPGSPQGYVCECGPSHYGPYCE. The EGF-like 7; calcium-binding domain maps to 1947 to 1979; that stretch reads NKLDLPCPRGWWGNPVCGPCHCAVSKGFDPDCN. N-linked (GlcNAc...) asparagine glycosylation is present at Asn1979. The 36-residue stretch at 1981-2016 folds into the EGF-like 8; calcium-binding domain; sequence TNGQCQCKENYYKLLAQDTCLPCDCFPHGSHSRTCD. 5 disulfides stabilise this stretch: Cys1985–Cys2000, Cys1987–Cys2003, Cys2005–Cys2015, Cys2024–Cys2033, and Cys2036–Cys2048. The Laminin EGF-like domain occupies 2003 to 2050; sequence CDCFPHGSHSRTCDMATGQCACKPGVIGRQCNRCDNPFAEVTTLGCEV. N-linked (GlcNAc...) asparagine glycans are attached at residues Asn2103, Asn2122, and Asn2257. The segment at 2291-2328 is disordered; sequence PEEKEGPLLRPAGRRTTPQTTRPGPGTEREAPISRRRR. In terms of domain architecture, GAIN-B spans 2297–2461; the sequence is PLLRPAGRRT…AVLMDISRRE (165 aa). A compositionally biased stretch (low complexity) spans 2300–2316; it reads RPAGRRTTPQTTRPGPG. 2 disulfide bridges follow: Cys2411–Cys2443 and Cys2431–Cys2445. The interval 2411–2461 is GPS; the sequence is CVFWNHSLAVGGTGGWSARGCELLSRNRTHVACQCSHTASFAVLMDISRRE. N-linked (GlcNAc...) asparagine glycosylation is found at Asn2415 and Asn2437. The helical transmembrane segment at 2470–2490 threads the bilayer; sequence IVTYAAVSLSLAALLVAFVLL. Residues 2491–2501 lie on the Cytoplasmic side of the membrane; sequence SLVRMLRSNLH. The chain crosses the membrane as a helical span at residues 2502–2522; the sequence is SIHKHLAVALFLSQLVFVIGI. An N-linked (GlcNAc...) asparagine glycan is attached at Asn2523. The Extracellular portion of the chain corresponds to 2523 to 2527; that stretch reads NQTEN. A helical membrane pass occupies residues 2528 to 2548; sequence PFLCTVVAILLHYIYMSTFAW. Topologically, residues 2549 to 2572 are cytoplasmic; it reads TLVESLHVYRMLTEVRNIDTGPMR. A helical membrane pass occupies residues 2573 to 2593; sequence FYYVVGWGIPAIVTGLAVGLD. Topologically, residues 2594-2611 are extracellular; the sequence is PQGYGNPDFCWLSLQDTL. Residues 2612-2632 traverse the membrane as a helical segment; sequence IWSFAGPIGAVIIINTVTSVL. The Cytoplasmic portion of the chain corresponds to 2633–2655; the sequence is SAKVSCQRKHHYYGKKGIVSLLR. The helical transmembrane segment at 2656–2676 threads the bilayer; sequence TAFLLLLLISATWLLGLLAVN. The Extracellular portion of the chain corresponds to 2677–2683; sequence RDALSFH. A helical transmembrane segment spans residues 2684-2704; the sequence is YLFAIFSGLQGPFVLLFHCVL. Over 2705–3014 the chain is Cytoplasmic; it reads NQEVRKHLKG…QADGSDSEKP (310 aa). Phosphoserine occurs at positions 2761 and 2764. Disordered regions lie at residues 2777-2939 and 2954-3014; these read SSGL…PPPL and LADC…SEKP. The span at 2796-2806 shows a compositional bias: basic and acidic residues; that stretch reads SCKDPPGHDSD. The segment covering 2814 to 2825 has biased composition (low complexity); that stretch reads DEQSSSYASSHS. Residues Ser2871 and Ser2873 each carry the phosphoserine modification. Basic and acidic residues predominate over residues 2876-2904; sequence PSGKPRLKVETKVSVELHREEQGSHRGEY. A compositionally biased stretch (low complexity) spans 2960–2969; the sequence is SPTSSRTSSL. The segment covering 2983 to 2992 has biased composition (basic and acidic residues); sequence PGREPGRDHL.

Belongs to the G-protein coupled receptor 2 family. LN-TM7 subfamily. Post-translationally, the iron and 2-oxoglutarate dependent 3-hydroxylation of aspartate and asparagine is (R) stereospecific within EGF domains.

The protein resides in the cell membrane. Its function is as follows. Receptor that may have an important role in cell/cell signaling during nervous system formation. The sequence is that of Cadherin EGF LAG seven-pass G-type receptor 1 (CELSR1) from Homo sapiens (Human).